Here is a 1269-residue protein sequence, read N- to C-terminus: Histone-lysine N-methyltransferase SETDB1 (1269 aa).

A coiled-coil region spans residues 9-63; it reads KELGISMDDLRELIDRELEKIEFVKQRKAQLLEMEQLVKQKEAEVDHVDKLFDNA. Disordered regions lie at residues 85-121 and 153-188; these read YKESSSEDEGSSKPTEVIEIPDEDDDDVMSVGSGEAV and QKKSDGPQTRFSSHPSSPTSSVGGSNQASASNDMSK. Positions 103–112 are enriched in acidic residues; sequence EIPDEDDDDV. A compositionally biased stretch (low complexity) spans 164–177; sequence SSHPSSPTSSVGGS. 2 consecutive Tudor domains span residues 250–312 and 340–395; these read ENLT…RPWS and VLLK…MFSM. A compositionally biased stretch (polar residues) spans 396 to 414; the sequence is KTSNASTQEKQQAGQQRTR. Positions 396 to 516 are disordered; sequence KTSNASTQEK…FQSNQSVQPV (121 aa). A compositionally biased stretch (low complexity) spans 462 to 476; the sequence is DSQQAQSKKQVAKKS. A compositionally biased stretch (polar residues) spans 486–497; it reads SGQSSPIPTESV. In terms of domain architecture, MBD spans 620 to 691; it reads HRGKNPLLVP…EMFCLDPYVL (72 aa). A Pre-SET domain is found at 753–826; sequence VGCDCTDGCR…MCNNRLVQHG (74 aa). Residues Cys-755, Cys-757, Cys-761, Cys-767, Cys-769, Cys-807, Cys-811, Cys-813, and Cys-818 each contribute to the Zn(2+) site. The SET domain maps to 829–1244; the sequence is VRLQLFKTQN…AGTELTWDYN (416 aa). S-adenosyl-L-methionine-binding positions include 839–841, Asp-877, and Tyr-879; that span reads KGW. The disordered stretch occupies residues 894–1139; it reads EGYESDAKSS…VAASAGPVKR (246 aa). A compositionally biased stretch (acidic residues) spans 919 to 932; that stretch reads SGSEDQEESNDSSD. 2 stretches are compositionally biased toward basic and acidic residues: residues 968–989 and 1021–1033; these read ASKDSRTRDETTDCKLPEETSK and ETDKPKESEEASK. The segment covering 1078–1094 has biased composition (low complexity); sequence TEEVLTLSSSSDSEVGS. Residues 1106 to 1120 show a composition bias toward polar residues; sequence ATANDSDDIQTISSG. S-adenosyl-L-methionine contacts are provided by residues Arg-1198 and 1201–1202; that span reads NH. Zn(2+)-binding residues include Cys-1204, Cys-1257, Cys-1259, and Cys-1264. The Post-SET domain maps to 1253–1269; that stretch reads KKLLCCCGSTECRGRLL.

This sequence belongs to the class V-like SAM-binding methyltransferase superfamily. Histone-lysine methyltransferase family. Suvar3-9 subfamily.

The protein localises to the nucleus. It is found in the chromosome. The catalysed reaction is N(6),N(6)-dimethyl-L-lysyl(9)-[histone H3] + S-adenosyl-L-methionine = N(6),N(6),N(6)-trimethyl-L-lysyl(9)-[histone H3] + S-adenosyl-L-homocysteine + H(+). Histone methyltransferase that specifically trimethylates 'Lys-9' of histone H3. H3 'Lys-9' trimethylation represents a specific tag for epigenetic transcriptional repression by recruiting HP1 (CBX1, CBX3 and/or CBX5) proteins to methylated histones. Mainly functions in euchromatin regions, thereby playing a central role in the silencing of euchromatic genes. H3 'Lys-9' trimethylation is coordinated with DNA methylation. Plays a role in promoter hypermethylation and transcriptional silencing of tumor suppressor genes (TSGs) or other tumor-related genes. Also required to maintain a transcriptionally repressive state of genes in undifferentiated embryonic stem cells (ESCs). Associates at promoter regions of tumor suppressor genes (TSGs) leading to their gene silencing. The polypeptide is Histone-lysine N-methyltransferase SETDB1 (setdb1) (Xenopus laevis (African clawed frog)).